A 221-amino-acid chain; its full sequence is Ribonuclease T (221 aa).

In terms of domain architecture, Exonuclease spans 20–194; sequence VVIDIETAGF…YDTLQTANLF (175 aa). 4 residues coordinate Mg(2+): Asp23, Glu25, His181, and Asp186. His181 acts as the Proton donor/acceptor in catalysis.

This sequence belongs to the RNase T family. Homodimer. Mg(2+) serves as cofactor.

Functionally, trims short 3' overhangs of a variety of RNA species, leaving a one or two nucleotide 3' overhang. Responsible for the end-turnover of tRNA: specifically removes the terminal AMP residue from uncharged tRNA (tRNA-C-C-A). Also appears to be involved in tRNA biosynthesis. This Buchnera aphidicola subsp. Acyrthosiphon pisum (strain APS) (Acyrthosiphon pisum symbiotic bacterium) protein is Ribonuclease T.